A 336-amino-acid chain; its full sequence is Biotin synthase (336 aa).

Residues 54–281 (NAIQLSTLLS…KAMVRLSAGR (228 aa)) form the Radical SAM core domain. The [4Fe-4S] cluster site is built by Cys69, Cys73, and Cys76. [2Fe-2S] cluster-binding residues include Cys113, Cys144, Cys204, and Arg276.

This sequence belongs to the radical SAM superfamily. Biotin synthase family. As to quaternary structure, homodimer. Requires [4Fe-4S] cluster as cofactor. [2Fe-2S] cluster is required as a cofactor.

The catalysed reaction is (4R,5S)-dethiobiotin + (sulfur carrier)-SH + 2 reduced [2Fe-2S]-[ferredoxin] + 2 S-adenosyl-L-methionine = (sulfur carrier)-H + biotin + 2 5'-deoxyadenosine + 2 L-methionine + 2 oxidized [2Fe-2S]-[ferredoxin]. It functions in the pathway cofactor biosynthesis; biotin biosynthesis; biotin from 7,8-diaminononanoate: step 2/2. Functionally, catalyzes the conversion of dethiobiotin (DTB) to biotin by the insertion of a sulfur atom into dethiobiotin via a radical-based mechanism. The polypeptide is Biotin synthase (Burkholderia pseudomallei (strain 1710b)).